The following is a 114-amino-acid chain: UPF0102 protein HP_0823 (114 aa).

It belongs to the UPF0102 family.

This is UPF0102 protein HP_0823 from Helicobacter pylori (strain ATCC 700392 / 26695) (Campylobacter pylori).